We begin with the raw amino-acid sequence, 150 residues long: Globin-3 (150 aa).

Residues Pro11–Tyr150 form the Globin domain. Heme b is bound by residues His74 and His106.

Belongs to the globin family. As to quaternary structure, monomer.

This chain is Globin-3, found in Mordacia mordax (Southern hemisphere lamprey).